The primary structure comprises 975 residues: Lateral signaling target protein 2 homolog (975 aa).

Disordered regions lie at residues 299 to 458 (PLGS…GTDE) and 504 to 523 (YGTA…PSTS). Composition is skewed to low complexity over residues 302–352 (SSSI…TTNT), 365–376 (NNHNSNSNSSSN), 383–400 (TLRS…TPTA), and 408–429 (PSHS…PADW). Residues 430 to 458 (SDGDDEDEDDDDIDVDEEDPESSDDGTDE) are compositionally biased toward acidic residues. Ser540 and Ser541 each carry phosphoserine. 2 disordered regions span residues 556-633 (EEHM…SSLS) and 740-891 (DNVF…SPPA). Basic residues predominate over residues 564–602 (GRHHRHHQSHHHHHHHRHSHQHQHRQPHPHRTTRSGRKR). A compositionally biased stretch (low complexity) spans 621–633 (LASGDTSAASSLS). A compositionally biased stretch (polar residues) spans 751–770 (ATGQRHSAGASMQRNNTIDL). Ser796 is subject to Phosphoserine. 2 stretches are compositionally biased toward low complexity: residues 802-860 (AASS…PVSA) and 877-890 (PSSA…LSPP). An FYVE-type zinc finger spans residues 895–955 (DGKAPRCMAC…VCRDCYVREV (61 aa)). Residues Cys901, Cys904, Cys917, Cys920, Cys925, Cys928, Cys947, and Cys950 each coordinate Zn(2+).

The protein belongs to the lst-2 family.

Functionally, negative regulator of epidermal growth factor receptor (EGFR) signaling. The protein is Lateral signaling target protein 2 homolog of Drosophila sechellia (Fruit fly).